Here is a 423-residue protein sequence, read N- to C-terminus: Glycine amidinotransferase, mitochondrial (423 aa).

The transit peptide at 1–43 (MLRVRCLRGGSRGAEALHYIGSRLGRTVTGWVQRTFQSTQAAT) directs the protein to the mitochondrion. Residues serine 46 and serine 49 each carry the phosphoserine modification. Arginine is bound at residue aspartate 170. Catalysis depends on residues aspartate 254 and histidine 303. Arginine contacts are provided by aspartate 305, arginine 322, serine 354, and serine 355. Lysine 385 is subject to N6-acetyllysine. Cysteine 407 functions as the Amidino-cysteine intermediate in the catalytic mechanism.

It belongs to the amidinotransferase family. Homodimer.

The protein resides in the mitochondrion inner membrane. It catalyses the reaction L-arginine + glycine = guanidinoacetate + L-ornithine. The enzyme catalyses 4-aminobutanoate + L-arginine = 4-guanidinobutanoate + L-ornithine. The catalysed reaction is beta-alanine + L-arginine = 3-guanidinopropanoate + L-ornithine. It carries out the reaction taurine + L-arginine = taurocyamine + L-ornithine. It participates in amine and polyamine biosynthesis; creatine biosynthesis; creatine from L-arginine and glycine: step 1/2. Functionally, transamidinase that catalyzes the transfer of the amidino group of L-arginine onto the amino moiety of acceptor metabolites such as glycine, beta-alanine, gamma-aminobutyric acid (GABA) and taurine yielding the corresponding guanidine derivatives. Catalyzes the rate-limiting step of creatine biosynthesis, namely the transfer of the amidino group from L-arginine to glycine to generate guanidinoacetate, which is then methylated by GAMT to form creatine. Provides creatine as a source for ATP generation in tissues with high energy demands, in particular skeletal muscle, heart and brain. This chain is Glycine amidinotransferase, mitochondrial (GATM), found in Bos taurus (Bovine).